The sequence spans 93 residues: Small ribosomal subunit protein uS19c (93 aa).

This sequence belongs to the universal ribosomal protein uS19 family.

The protein localises to the plastid. Its subcellular location is the chloroplast. Protein S19 forms a complex with S13 that binds strongly to the 16S ribosomal RNA. The chain is Small ribosomal subunit protein uS19c (rps19-A) from Zea mays (Maize).